A 65-amino-acid chain; its full sequence is MALPKNLIPMPRSRFLRVKCIDCGNEQIVFSHPATKVRCLVCGATLVEPTGGKGVIKAKILEVLE.

Residues C20, C23, C39, and C42 each contribute to the Zn(2+) site. A C4-type zinc finger spans residues 20–42 (CIDCGNEQIVFSHPATKVRCLVC).

The protein belongs to the eukaryotic ribosomal protein eS27 family. Part of the 30S ribosomal subunit. It depends on Zn(2+) as a cofactor.

In Thermococcus gammatolerans (strain DSM 15229 / JCM 11827 / EJ3), this protein is Small ribosomal subunit protein eS27.